We begin with the raw amino-acid sequence, 277 residues long: Shikimate dehydrogenase (NADP(+)) (277 aa).

Shikimate-binding positions include 15–17 (SLS) and T62. Residue K66 is the Proton acceptor of the active site. Residues N87 and D102 each coordinate shikimate. NADP(+) contacts are provided by residues 127–131 (GAGGA), 151–156 (NRTVDK), and I219. Y221 serves as a coordination point for shikimate. G242 provides a ligand contact to NADP(+).

Belongs to the shikimate dehydrogenase family. As to quaternary structure, homodimer.

It carries out the reaction shikimate + NADP(+) = 3-dehydroshikimate + NADPH + H(+). Its pathway is metabolic intermediate biosynthesis; chorismate biosynthesis; chorismate from D-erythrose 4-phosphate and phosphoenolpyruvate: step 4/7. In terms of biological role, involved in the biosynthesis of the chorismate, which leads to the biosynthesis of aromatic amino acids. Catalyzes the reversible NADPH linked reduction of 3-dehydroshikimate (DHSA) to yield shikimate (SA). This is Shikimate dehydrogenase (NADP(+)) from Bacillus cereus (strain G9842).